Reading from the N-terminus, the 814-residue chain is Protein fam-161 (814 aa).

Polar residues predominate over residues 71–87 (ITQHRSSYKVTKSSSCH). 4 disordered regions span residues 71–130 (ITQH…SWSQ), 150–255 (RHQV…ATSA), 569–610 (SRSK…THAT), and 714–814 (MKSA…SSEA). The span at 99–111 (MPRHLDLKPRSSE) shows a compositional bias: basic and acidic residues. Residues 174 to 193 (STAPSQVSVTSSVQSVAALS) show a composition bias toward low complexity. 2 stretches are compositionally biased toward polar residues: residues 194–207 (GQNP…TPSH) and 216–235 (RTHQ…TLQN). Over residues 236-249 (PRHRTSSASRHHST) the composition is skewed to basic residues. Polar residues-rich tracts occupy residues 570 to 583 (RSKS…NCQE) and 594 to 610 (ENLP…THAT). Positions 606–689 (STHATQLREE…LAEMKQRVLN (84 aa)) form a coiled coil. A compositionally biased stretch (basic and acidic residues) spans 714-727 (MKSAKGRGIERVQS). The segment covering 728–745 (QEKQQSIGRRSSEVSGSG) has biased composition (polar residues). A compositionally biased stretch (basic and acidic residues) spans 751-765 (KGYEESFESEDKSEK). Low complexity-rich tracts occupy residues 766-779 (SGSS…SGSE) and 795-814 (SKST…SSEA).

Belongs to the FAM161 family. Expressed in amphid and phasmid ciliated neurons.

It is found in the cell projection. It localises to the cilium. The protein resides in the cytoplasm. The protein localises to the cytoskeleton. Its subcellular location is the cilium axoneme. The protein is Protein fam-161 of Caenorhabditis elegans.